Reading from the N-terminus, the 225-residue chain is NAD(P)H-quinone oxidoreductase subunit K, chloroplastic (225 aa).

The [4Fe-4S] cluster site is built by C43, C44, C108, and C139.

This sequence belongs to the complex I 20 kDa subunit family. NDH is composed of at least 16 different subunits, 5 of which are encoded in the nucleus. [4Fe-4S] cluster serves as cofactor.

It is found in the plastid. It localises to the chloroplast thylakoid membrane. It carries out the reaction a plastoquinone + NADH + (n+1) H(+)(in) = a plastoquinol + NAD(+) + n H(+)(out). It catalyses the reaction a plastoquinone + NADPH + (n+1) H(+)(in) = a plastoquinol + NADP(+) + n H(+)(out). In terms of biological role, NDH shuttles electrons from NAD(P)H:plastoquinone, via FMN and iron-sulfur (Fe-S) centers, to quinones in the photosynthetic chain and possibly in a chloroplast respiratory chain. The immediate electron acceptor for the enzyme in this species is believed to be plastoquinone. Couples the redox reaction to proton translocation, and thus conserves the redox energy in a proton gradient. In Lolium perenne (Perennial ryegrass), this protein is NAD(P)H-quinone oxidoreductase subunit K, chloroplastic.